We begin with the raw amino-acid sequence, 194 residues long: Large ribosomal subunit protein bL17 (194 aa).

A disordered region spans residues 126-194; it reads AEPKQTKART…SPEQTNKQEE (69 aa). Positions 131–140 are enriched in basic residues; that stretch reads TKARTRRGKG. Composition is skewed to polar residues over residues 144–161 and 181–194; these read ATTTVSSEKTQPNTQDMA and LDTQSPEQTNKQEE.

It belongs to the bacterial ribosomal protein bL17 family. In terms of assembly, part of the 50S ribosomal subunit. Contacts protein L32.

In Amoebophilus asiaticus (strain 5a2), this protein is Large ribosomal subunit protein bL17.